Consider the following 75-residue polypeptide: RNA-binding protein KhpA (75 aa).

The KH domain occupies 29–75 (KKVYEIVVNEEDVGQVIGKDGRTIKSLKILLSALMGDSKEITIKVVR).

This sequence belongs to the KhpA RNA-binding protein family. In terms of assembly, forms a complex with KhpB.

The protein resides in the cytoplasm. A probable RNA chaperone. Forms a complex with KhpB which binds to cellular RNA and controls its expression. Plays a role in peptidoglycan (PG) homeostasis and cell length regulation. This Thermotoga maritima (strain ATCC 43589 / DSM 3109 / JCM 10099 / NBRC 100826 / MSB8) protein is RNA-binding protein KhpA.